The following is a 392-amino-acid chain: Monooxygenase AgnR1 (392 aa).

Residues Met1–Ala20 form the signal peptide. A glycan (N-linked (GlcNAc...) asparagine) is linked at Asn134.

Its function is as follows. Monooxygenase; part of the gene cluster that mediates the biosynthesis of agnestins, dihydroxy-xanthone metabolites. The pathway begins with the assembly and cyclization of atrochrysone thioester by the non-reducing polyketide synthase Agnpks1. The atrochrysone carboxyl ACP thioesterase AgnL7 then breaks the thioester bond and releases the atrochrysone carboxylic acid as the first enzyme-free intermediate. The decarboxylase AgnL1 then catalyzes the concerted decarboxylation-elimination required to convert atochrysone carboxylic acid into emodin anthrone, which is further oxidized to emodin by the anthrone oxygenase AgnL2. Emodin then undergoes reduction catalyzed by the oxidoreductase AgnL4 to yield the dihydroquinone tautomer which is the substrate for reduction by the short chain dehydrogenase AgnL6 reduction to produce hydroxyketone, followed by AgnL8 dehydration and likely spontaneous autoxidation to chrysophanol. Baeyer-Villiger oxidation by the oxidase AgnL3 leads to monodictyphenone via cleavage of the C-10/C-10a bond of chrysophanol. Alternative cleavage at the C-4a/C-10 bond of chrysophanol also leads to the formation some cephalone F. Further conversion to agnestins A and B, requires reduction to dihydro-monodictyphenone, oxidation to agnestin C probably via an epoxide, and rearrangement to either agnestin A or agnestin B directly, although agnestin A or agnestin B can also interconvert. Within the cluster, AgnR1 is the only unassigned oxidoreductase present which could be involved in this conversion. However, AgnR1 seems not to be involved in this step, and thus genes involved in the proposed oxidation/reduction may be located elsewhere on the genome. Further agnestin A derivatives are probably formed by spontaneous decarboxylations, dehydrations and methanolysis reactions. In Paecilomyces divaricatus (Penicillium divaricatum), this protein is Monooxygenase AgnR1.